We begin with the raw amino-acid sequence, 201 residues long: Musculin (201 aa).

Disordered stretches follow at residues 1–108 (MSTG…NAAN) and 182–201 (RPDS…GTSA). Positions 46-56 (SAEEEDGEEEP) are enriched in acidic residues. The Nuclear localization signal signature appears at 66-71 (KRKRLR). Over residues 74–86 (DAGGAGGRAGGAG) the composition is skewed to gly residues. In terms of domain architecture, bHLH spans 102–154 (SQRNAANARERARMRVLSKAFSRLKTSLPWVPPDTKLSKLDTLRLASSYIAHL).

In terms of assembly, efficient DNA binding requires dimerization with another bHLH protein. Binds DNA as a homodimer or a heterodimer. Forms a heterodimer with TCF3.

It is found in the nucleus. Its function is as follows. Transcription repressor that blocks myogenesis and activation of E-box dependent muscle genes. This Mus musculus (Mouse) protein is Musculin (Msc).